The primary structure comprises 414 residues: Glutamyl-tRNA reductase (414 aa).

Residues Thr48–Arg51, Ser104, Glu109–Gln111, and Gln115 contribute to the substrate site. The active-site Nucleophile is the Cys49. Position 184–189 (Gly184–Ile189) interacts with NADP(+).

It belongs to the glutamyl-tRNA reductase family. Homodimer.

The catalysed reaction is (S)-4-amino-5-oxopentanoate + tRNA(Glu) + NADP(+) = L-glutamyl-tRNA(Glu) + NADPH + H(+). It participates in porphyrin-containing compound metabolism; protoporphyrin-IX biosynthesis; 5-aminolevulinate from L-glutamyl-tRNA(Glu): step 1/2. In terms of biological role, catalyzes the NADPH-dependent reduction of glutamyl-tRNA(Glu) to glutamate 1-semialdehyde (GSA). This chain is Glutamyl-tRNA reductase, found in Methylobacillus flagellatus (strain ATCC 51484 / DSM 6875 / VKM B-1610 / KT).